The following is a 324-amino-acid chain: CYFIP-related Rac1 interactor B (324 aa).

Residue Gly2 is the site of N-myristoyl glycine attachment. Lys74 participates in a covalent cross-link: Glycyl lysine isopeptide (Lys-Gly) (interchain with G-Cter in ubiquitin).

It belongs to the CYRI family. As to quaternary structure, interacts with RAC1 (GTP-bound form preferentially). In terms of processing, ubiquitinated at Lys-74 upon Salmonella bacterial infection.

The protein localises to the membrane. The protein resides in the mitochondrion. Negatively regulates RAC1 signaling and RAC1-driven cytoskeletal remodeling. Regulates chemotaxis, cell migration and epithelial polarization by controlling the polarity, plasticity, duration and extent of protrusions. Limits Rac1 mediated activation of the Scar/WAVE complex, focuses protrusion signals and regulates pseudopod complexity by inhibiting Scar/WAVE-induced actin polymerization. Protects against Salmonella bacterial infection. Attenuates processes such as macropinocytosis, phagocytosis and cell migration and restrict sopE-mediated bacterial entry. Also restricts infection mediated by Mycobacterium tuberculosis and Listeria monocytogenes. Involved in the regulation of mitochondrial dynamics and oxidative stress. This is CYFIP-related Rac1 interactor B from Homo sapiens (Human).